Reading from the N-terminus, the 67-residue chain is Spiniferin (67 aa).

Positions 1-23 (MKTQLAILLITLVLFQMFSQSDA) are cleaved as a signal peptide. L36 is subject to Leucine amide. Positions 40-67 (GLNDLSDLDELFDGEISKADLDFLREIM) are excised as a propeptide.

Belongs to the non-disulfide-bridged peptide (NDBP) superfamily. Short antimicrobial peptide (group 4) family. Expressed by the venom gland.

It localises to the secreted. The protein localises to the target cell membrane. In terms of biological role, alpha-helical and amphipathic peptide with weak antimicrobial activities against both Gram-positive (MIC=41 uM to &gt;82 uM) and Gram-negative (MIC&gt;82 uM) bacteria. It has extremely weak hemolytic activity against human erythrocytes. This chain is Spiniferin, found in Heterometrus spinifer (Asia giant forest scorpion).